The primary structure comprises 193 residues: Ubiquitin-conjugating enzyme E2 E1 (193 aa).

A disordered region spans residues 1–45; sequence MSDDDSRASTSSSSSSSSNQQTEKETNTPKKKESKVSMSKNSKLL. Ser-2 is modified (N-acetylserine). Residues 8–18 are compositionally biased toward low complexity; the sequence is ASTSSSSSSSS. Positions 22–35 are enriched in basic and acidic residues; it reads TEKETNTPKKKESK. The span at 36 to 45 shows a compositional bias: polar residues; sequence VSMSKNSKLL. One can recognise a UBC core domain in the interval 47–193; it reads TSAKRIQKEL…ARQWTKRYAT (147 aa). Cys-131 functions as the Glycyl thioester intermediate in the catalytic mechanism. A Glycyl lysine isopeptide (Lys-Gly) (interchain with G-Cter in ISG15) cross-link involves residue Lys-136.

This sequence belongs to the ubiquitin-conjugating enzyme family. In terms of assembly, interacts with RNF14. In terms of processing, ISGylation suppresses ubiquitin E2 enzyme activity. Post-translationally, autoubiquitinated in vitro.

The protein resides in the nucleus. It carries out the reaction S-ubiquitinyl-[E1 ubiquitin-activating enzyme]-L-cysteine + [E2 ubiquitin-conjugating enzyme]-L-cysteine = [E1 ubiquitin-activating enzyme]-L-cysteine + S-ubiquitinyl-[E2 ubiquitin-conjugating enzyme]-L-cysteine.. It catalyses the reaction S-ubiquitinyl-[E1 ubiquitin-activating enzyme]-L-cysteine + [acceptor protein]-L-lysine = [E1 ubiquitin-activating enzyme]-L-cysteine + N(6)-monoubiquitinyl-[acceptor protein]-L-lysine.. Its pathway is protein modification; protein ubiquitination. Accepts ubiquitin from the E1 complex and catalyzes its covalent attachment to other proteins. Catalyzes the covalent attachment of ISG15 to other proteins. Mediates the selective degradation of short-lived and abnormal proteins. In vitro also catalyzes 'Lys-48'-linked polyubiquitination. Catalyzes monoubiquitination of other proteins in both an E3-dependent and E3-independent manner. The chain is Ubiquitin-conjugating enzyme E2 E1 from Homo sapiens (Human).